A 185-amino-acid chain; its full sequence is Ribosome-recycling factor (185 aa).

The protein belongs to the RRF family.

It is found in the cytoplasm. Responsible for the release of ribosomes from messenger RNA at the termination of protein biosynthesis. May increase the efficiency of translation by recycling ribosomes from one round of translation to another. The sequence is that of Ribosome-recycling factor from Glaesserella parasuis serovar 5 (strain SH0165) (Haemophilus parasuis).